We begin with the raw amino-acid sequence, 423 residues long: Progestin and adipoQ receptor-like protein 1 (423 aa).

Topologically, residues 1–201 (MDPDEVNQAL…KSIWSLHTET (201 aa)) are cytoplasmic. The tract at residues 54–140 (VVSPTNSDDE…DEDELEVDVK (87 aa)) is disordered. The span at 60–69 (SDDEEGEFCS) shows a compositional bias: acidic residues. The span at 104–114 (TVLRYRRKKGG) shows a compositional bias: basic residues. The chain crosses the membrane as a helical span at residues 202 to 222 (GNIWTHLIGCVAFFLLACWFL). The Extracellular segment spans residues 223–234 (TRPDNHIQFQEK). The chain crosses the membrane as a helical span at residues 235–252 (VVFSFFFAGAVSVSDSRS). Over 253 to 288 (PSTPSRVIRSTSSRYSANSTIWESRCSLSARLFQPK) the chain is Cytoplasmic. The chain crosses the membrane as a helical span at residues 289–309 (ITYIAMVCVLGIGAIVVSLWD). Residues 310–320 (KFSESKYRPVR) are Extracellular-facing. Residues 321-341 (AAVFVGMGCSGVIPTIHYIIT) traverse the membrane as a helical segment. At 342–351 (DGVHSLFADN) the chain is on the cytoplasmic side. The helical transmembrane segment at 352–372 (SFHWLLLMAFLYLLGAALYAT) threads the bilayer. Topologically, residues 373–392 (RTPERFFPGKCDIWFQSHQL) are extracellular. The chain crosses the membrane as a helical span at residues 393–413 (FHTCVVIAAFVHYYGISEMAF). The Cytoplasmic segment spans residues 414–423 (ARLNEQCPVR).

This sequence belongs to the ADIPOR family.

It is found in the membrane. In terms of biological role, probable receptor, which may be involved in metabolic pathways that regulate lipid metabolism such as fatty acid oxidation. This is Progestin and adipoQ receptor-like protein 1 from Caenorhabditis briggsae.